The sequence spans 138 residues: Mini-ribonuclease 3 (138 aa).

D33 is an active-site residue.

The protein belongs to the MrnC RNase family. In terms of assembly, homodimer. Mg(2+) is required as a cofactor.

It localises to the cytoplasm. Functionally, involved in correct processing of both the 5' and 3' ends of 23S rRNA precursor. Processes 30S rRNA precursor transcript even in absence of ribonuclease 3 (Rnc); Rnc processes 30S rRNA into smaller rRNA precursors. The polypeptide is Mini-ribonuclease 3 (Synechococcus sp. (strain ATCC 27144 / PCC 6301 / SAUG 1402/1) (Anacystis nidulans)).